Here is a 172-residue protein sequence, read N- to C-terminus: MPDYYDIGTIVNTHGIRGEVRVLVTTDFPADRFKVGNTVYVATSPKTALTIQSVREHKGLTLLTFKDYTDINQVLPFKGKKLQVTETALQPLDEGSYYYKDIIGLTVIDEQGQTLGKVNEILSPGPNDVWVIPRSGKSDILLPFLKSVVQSIDLDQKVAHVIVPEGLIDDAD.

The PRC barrel domain occupies 94 to 167 (EGSYYYKDII…VAHVIVPEGL (74 aa)).

It belongs to the RimM family. Binds ribosomal protein uS19.

It localises to the cytoplasm. In terms of biological role, an accessory protein needed during the final step in the assembly of 30S ribosomal subunit, possibly for assembly of the head region. Essential for efficient processing of 16S rRNA. May be needed both before and after RbfA during the maturation of 16S rRNA. It has affinity for free ribosomal 30S subunits but not for 70S ribosomes. The sequence is that of Ribosome maturation factor RimM from Lacticaseibacillus paracasei (strain ATCC 334 / BCRC 17002 / CCUG 31169 / CIP 107868 / KCTC 3260 / NRRL B-441) (Lactobacillus paracasei).